Reading from the N-terminus, the 250-residue chain is L-ascorbate peroxidase 1, cytosolic (250 aa).

H42 serves as the catalytic Proton acceptor. A disordered region spans residues 113 to 137 (VPFHPGREDKPAPPPEGRLPDATKG). Position 163 (H163) interacts with heme b. 4 residues coordinate K(+): T164, T180, N182, and D187.

This sequence belongs to the peroxidase family. Ascorbate peroxidase subfamily. Heme b serves as cofactor.

Its subcellular location is the cytoplasm. The catalysed reaction is L-ascorbate + H2O2 = L-dehydroascorbate + 2 H2O. Plays a key role in hydrogen peroxide removal. This chain is L-ascorbate peroxidase 1, cytosolic (APX1), found in Oryza sativa subsp. indica (Rice).